The chain runs to 482 residues: tRNA sulfurtransferase (482 aa).

The THUMP domain maps to 58–160 (VEALQELSRV…GNKAYLYSNV (103 aa)). ATP-binding positions include 178–179 (LF), 203–204 (HY), Arg260, Gly282, and Gln291. Cys341 and Cys444 are disulfide-bonded. The Rhodanese domain maps to 400 to 482 (IPGDSIIIDV…RYRAGLEKTR (83 aa)). The active-site Cysteine persulfide intermediate is the Cys444.

It belongs to the ThiI family.

It is found in the cytoplasm. It carries out the reaction [ThiI sulfur-carrier protein]-S-sulfanyl-L-cysteine + a uridine in tRNA + 2 reduced [2Fe-2S]-[ferredoxin] + ATP + H(+) = [ThiI sulfur-carrier protein]-L-cysteine + a 4-thiouridine in tRNA + 2 oxidized [2Fe-2S]-[ferredoxin] + AMP + diphosphate. The enzyme catalyses [ThiS sulfur-carrier protein]-C-terminal Gly-Gly-AMP + S-sulfanyl-L-cysteinyl-[cysteine desulfurase] + AH2 = [ThiS sulfur-carrier protein]-C-terminal-Gly-aminoethanethioate + L-cysteinyl-[cysteine desulfurase] + A + AMP + 2 H(+). Its pathway is cofactor biosynthesis; thiamine diphosphate biosynthesis. In terms of biological role, catalyzes the ATP-dependent transfer of a sulfur to tRNA to produce 4-thiouridine in position 8 of tRNAs, which functions as a near-UV photosensor. Also catalyzes the transfer of sulfur to the sulfur carrier protein ThiS, forming ThiS-thiocarboxylate. This is a step in the synthesis of thiazole, in the thiamine biosynthesis pathway. The sulfur is donated as persulfide by IscS. This Desulfurococcus amylolyticus (strain DSM 18924 / JCM 16383 / VKM B-2413 / 1221n) (Desulfurococcus kamchatkensis) protein is tRNA sulfurtransferase.